A 157-amino-acid chain; its full sequence is Protein Smg homolog (157 aa).

This sequence belongs to the Smg family.

The polypeptide is Protein Smg homolog (Idiomarina loihiensis (strain ATCC BAA-735 / DSM 15497 / L2-TR)).